Reading from the N-terminus, the 195-residue chain is dTTP/UTP pyrophosphatase (195 aa).

Residue Asp76 is the Proton acceptor of the active site.

The protein belongs to the Maf family. YhdE subfamily. Requires a divalent metal cation as cofactor.

It localises to the cytoplasm. The catalysed reaction is dTTP + H2O = dTMP + diphosphate + H(+). It carries out the reaction UTP + H2O = UMP + diphosphate + H(+). Its function is as follows. Nucleoside triphosphate pyrophosphatase that hydrolyzes dTTP and UTP. May have a dual role in cell division arrest and in preventing the incorporation of modified nucleotides into cellular nucleic acids. The polypeptide is dTTP/UTP pyrophosphatase (Shewanella frigidimarina (strain NCIMB 400)).